Consider the following 267-residue polypeptide: tRNA-cytidine(32) 2-sulfurtransferase 1 (267 aa).

The short motif at 42–47 (SGGKDS) is the PP-loop motif element. [4Fe-4S] cluster contacts are provided by Cys-117, Cys-120, and Cys-208.

Belongs to the TtcA family. Homodimer. It depends on Mg(2+) as a cofactor. Requires [4Fe-4S] cluster as cofactor.

Its subcellular location is the cytoplasm. It carries out the reaction cytidine(32) in tRNA + S-sulfanyl-L-cysteinyl-[cysteine desulfurase] + AH2 + ATP = 2-thiocytidine(32) in tRNA + L-cysteinyl-[cysteine desulfurase] + A + AMP + diphosphate + H(+). The protein operates within tRNA modification. In terms of biological role, catalyzes the ATP-dependent 2-thiolation of cytidine in position 32 of tRNA, to form 2-thiocytidine (s(2)C32). The sulfur atoms are provided by the cysteine/cysteine desulfurase (IscS) system. The protein is tRNA-cytidine(32) 2-sulfurtransferase 1 of Francisella tularensis subsp. novicida (strain U112).